Consider the following 429-residue polypeptide: Threonine synthase (429 aa).

Lysine 108 is subject to N6-(pyridoxal phosphate)lysine.

This sequence belongs to the threonine synthase family. The cofactor is pyridoxal 5'-phosphate.

The catalysed reaction is O-phospho-L-homoserine + H2O = L-threonine + phosphate. It participates in amino-acid biosynthesis; L-threonine biosynthesis; L-threonine from L-aspartate: step 5/5. Functionally, catalyzes the gamma-elimination of phosphate from L-phosphohomoserine and the beta-addition of water to produce L-threonine. The sequence is that of Threonine synthase (thrC) from Buchnera aphidicola subsp. Acyrthosiphon pisum (strain APS) (Acyrthosiphon pisum symbiotic bacterium).